Here is a 73-residue protein sequence, read N- to C-terminus: DNA-directed RNA polymerase subunit epsilon (73 aa).

Belongs to the RNA polymerase subunit epsilon family. RNAP is composed of a core of 2 alpha, a beta and a beta' subunit. The core is associated with a delta subunit, and at least one of epsilon or omega. When a sigma factor is associated with the core the holoenzyme is formed, which can initiate transcription.

The catalysed reaction is RNA(n) + a ribonucleoside 5'-triphosphate = RNA(n+1) + diphosphate. A non-essential component of RNA polymerase (RNAP). The polypeptide is DNA-directed RNA polymerase subunit epsilon (Lactobacillus helveticus (strain DPC 4571)).